The chain runs to 81 residues: MNHDIPLKYFDIADEYATECAEPVAEAERTPLAHYFQLLLTRLMNNEEISEEAQHEMAAEAGINPVRIDEIAEFLNQWGNE.

This is an uncharacterized protein from Escherichia coli (strain K12).